The primary structure comprises 236 residues: Cancer/testis antigen 55 (236 aa).

The interval 57–84 (RSSADVETGDNPLKAEPNLPAAVEEQSP) is disordered.

As to quaternary structure, interacts with GABARAP; this interaction may be important for GABARAP protein stability. Interacts with LAMP2; this interaction may be important for LAMP2 protein stability. In terms of tissue distribution, expressed in spermatozoa (at protein level).

The protein resides in the cytoplasm. Its subcellular location is the cytoplasmic vesicle. It is found in the secretory vesicle. It localises to the acrosome. The protein localises to the cell projection. The protein resides in the cilium. Its subcellular location is the flagellum. Plays a role in spermatogenesis, possibly acting in the regulation of the autophagy pathway. This Mus musculus (Mouse) protein is Cancer/testis antigen 55 (Ct55).